A 20-amino-acid polypeptide reads, in one-letter code: Sperm acrosome membrane-associated protein 3, processed form (20 aa).

Belongs to the glycosyl hydrolase 22 family.

In terms of biological role, sperm surface membrane protein that may be involved in sperm-egg plasma membrane adhesion and fusion during fertilization. It could be a potential receptor for the egg oligosaccharide residue N-acetylglucosamine, which is present in the extracellular matrix over the egg plasma membrane. This is Sperm acrosome membrane-associated protein 3, processed form (SPACA3) from Vulpes vulpes (Red fox).